Reading from the N-terminus, the 166-residue chain is SsrA-binding protein (166 aa).

The protein belongs to the SmpB family.

The protein resides in the cytoplasm. In terms of biological role, required for rescue of stalled ribosomes mediated by trans-translation. Binds to transfer-messenger RNA (tmRNA), required for stable association of tmRNA with ribosomes. tmRNA and SmpB together mimic tRNA shape, replacing the anticodon stem-loop with SmpB. tmRNA is encoded by the ssrA gene; the 2 termini fold to resemble tRNA(Ala) and it encodes a 'tag peptide', a short internal open reading frame. During trans-translation Ala-aminoacylated tmRNA acts like a tRNA, entering the A-site of stalled ribosomes, displacing the stalled mRNA. The ribosome then switches to translate the ORF on the tmRNA; the nascent peptide is terminated with the 'tag peptide' encoded by the tmRNA and targeted for degradation. The ribosome is freed to recommence translation, which seems to be the essential function of trans-translation. In Parasynechococcus marenigrum (strain WH8102), this protein is SsrA-binding protein.